Here is a 747-residue protein sequence, read N- to C-terminus: E3 UFM1-protein ligase 1 homolog (747 aa).

Positions glutamate 403–leucine 468 are disordered. The span at glycine 429–lysine 438 shows a compositional bias: basic residues. Over residues glycine 439–glycine 449 the composition is skewed to gly residues. Residues alanine 450 to serine 465 show a composition bias toward polar residues.

The protein belongs to the UFL1 family.

Functionally, E3 UFM1-protein ligase that mediates ufmylation of target proteins. This is E3 UFM1-protein ligase 1 homolog (ufl-1) from Caenorhabditis briggsae.